The primary structure comprises 600 residues: Brain-enriched guanylate kinase-associated protein (600 aa).

Residue Met1 is modified to N-acetylmethionine. Tyr137 is modified (phosphotyrosine). The disordered stretch occupies residues 192–222 (PGSLSSRMSDASARDLGYRDGVEKSGPRPPY). Ser200 carries the phosphoserine modification. The segment covering 203 to 217 (SARDLGYRDGVEKSG) has biased composition (basic and acidic residues). Residues Ser229 and Ser246 each carry the phosphoserine modification. Thr249 carries the phosphothreonine modification. Phosphoserine is present on Ser265. The tract at residues 298-317 (SSYSSFSATSEEKEHAQAGT) is disordered. Position 372 is a phosphoserine (Ser372). Position 380 is an asymmetric dimethylarginine (Arg380). Phosphoserine occurs at positions 463, 473, 483, 485, 508, 510, and 514. The interval 537 to 590 (GAGSSPEPEHGSRESLEPSSMEASPEMHPPTRLSPQQAFPRTGGSGLSRKDSLT) is disordered. Residues 543 to 552 (EPEHGSRESL) are compositionally biased toward basic and acidic residues. Ser560 and Ser570 each carry phosphoserine.

In terms of assembly, interacts with DLG4 and DLGAP1 and forms a ternary complex.

The protein resides in the cytoplasm. The protein localises to the membrane. In terms of biological role, may sustain the structure of the postsynaptic density (PSD). This Mus musculus (Mouse) protein is Brain-enriched guanylate kinase-associated protein (Begain).